The primary structure comprises 309 residues: Homoserine kinase (309 aa).

91–101 (PIGSGLGSSAC) contacts ATP.

This sequence belongs to the GHMP kinase family. Homoserine kinase subfamily.

It localises to the cytoplasm. The enzyme catalyses L-homoserine + ATP = O-phospho-L-homoserine + ADP + H(+). It participates in amino-acid biosynthesis; L-threonine biosynthesis; L-threonine from L-aspartate: step 4/5. Functionally, catalyzes the ATP-dependent phosphorylation of L-homoserine to L-homoserine phosphate. This Yersinia pseudotuberculosis serotype O:1b (strain IP 31758) protein is Homoserine kinase.